A 301-amino-acid chain; its full sequence is MNSINFLSIVGLISFGFIVAVKCDGDEYFIGKYKEKDETLFFASYGLKRDPCQIVLGYKCSNNQTHFVLNFKTNKKSCISAIKLTSYPKINQNSDLTKNLYCQTGGIGTDNCKLVFKKRKRQIAANIEIYGIPAKKCSFKDRYIGADPLHVDSYGLPYQFDQEHGWNVERYNIFKDTRFSTEVFYHKNGLFNTQITYLAEEDSFSEAREITAKDIKKKFSIILPNEEYKRISFLDVYWFQETMRKKPKYPYIHYNGECSNENKTCELVFDTDELMTYALVKVFTNPESDGSRLKEEDLGRG.

The N-terminal stretch at 1–23 is a signal peptide; sequence MNSINFLSIVGLISFGFIVAVKC. 4 disulfides stabilise this stretch: Cys-52–Cys-60, Cys-78–Cys-137, Cys-102–Cys-112, and Cys-258–Cys-265. Asn-262 is a glycosylation site (N-linked (GlcNAc...) asparagine).

Interacts with factor Xa. Associates with complement proconvertase C3b-B complex. Expressed in salivary glands.

It localises to the secreted. In terms of biological role, sand fly salivary protein with antithrombotic, and anti-complement (alternative pathway) activities. Is a slow, tight, non-competitive, and reversible inhibitor of factor Xa (FXa, F10). Is specific for FXa (Kd=3.86 nM) and does not interact with non-activated FX, or all other enzymes tested. In addition, it blocks prothrombinase and increases both prothrombin time and activated partial thromboplastin time. It also prevents protease-activated receptor 2 (F2RL1, PAR2) activation by FXa. In vivo, it abrogates edema formation triggered by injection of FXa in the paw of mice. Moreover, it prevents FeCl(3)-induced carotid artery thrombus formation and prolongs activated partial thromboplastin time ex vivo, implying that it works as an anticoagulant in vivo. It also inhibits the early steps of the alternative pathway of complement by direct binding to the proconvertase C3b-B complex, by inhibiting activation of factor B and consequently the formation of the C3 convertase. The polypeptide is Lufaxin (Lutzomyia longipalpis (Sand fly)).